The following is a 595-amino-acid chain: UvrABC system protein C (595 aa).

The region spanning 17–94 (FEPGCYLMKD…IKQYQPRYNI (78 aa)) is the GIY-YIG domain. The UVR domain maps to 199–234 (KTIIKNLESRMQAASENLEFEQAKEYRDLIQNIHNL).

Belongs to the UvrC family. As to quaternary structure, interacts with UvrB in an incision complex.

It is found in the cytoplasm. The UvrABC repair system catalyzes the recognition and processing of DNA lesions. UvrC both incises the 5' and 3' sides of the lesion. The N-terminal half is responsible for the 3' incision and the C-terminal half is responsible for the 5' incision. This is UvrABC system protein C from Staphylococcus carnosus (strain TM300).